Here is a 250-residue protein sequence, read N- to C-terminus: Small ribosomal subunit protein uS3 (250 aa).

The 69-residue stretch at 39–107 folds into the KH type-2 domain; it reads VREFLTKNLK…PAQVSINEID (69 aa). Residues 215-250 are disordered; that stretch reads MNPAPAEERPAKRGRGRGEGQERRGRRGDRAADKGE. The segment covering 220 to 250 has biased composition (basic and acidic residues); the sequence is AEERPAKRGRGRGEGQERRGRRGDRAADKGE.

It belongs to the universal ribosomal protein uS3 family. As to quaternary structure, part of the 30S ribosomal subunit. Forms a tight complex with proteins S10 and S14.

Functionally, binds the lower part of the 30S subunit head. Binds mRNA in the 70S ribosome, positioning it for translation. The polypeptide is Small ribosomal subunit protein uS3 (Acinetobacter baumannii (strain AB0057)).